A 684-amino-acid polypeptide reads, in one-letter code: ATP-dependent DNA helicase RecG (684 aa).

Positions 51-148 (RHIASMATLQ…ADVPQFQAPH (98 aa)) are wedge domain. The region spanning 278–439 (DLARHRPMRR…VHADLEVSVI (162 aa)) is the Helicase ATP-binding domain. 291–298 (GDVGSGKT) provides a ligand contact to ATP. The DEAH box motif lies at 392–395 (DEQH).

It belongs to the helicase family. RecG subfamily. In terms of assembly, monomer.

The enzyme catalyses Couples ATP hydrolysis with the unwinding of duplex DNA by translocating in the 3'-5' direction.. The catalysed reaction is ATP + H2O = ADP + phosphate + H(+). Functionally, plays a critical role in recombination and DNA repair. Helps process Holliday junction intermediates to mature products by catalyzing branch migration. Has replication fork regression activity, unwinds stalled or blocked replication forks to make a HJ that can be resolved. Has a DNA unwinding activity characteristic of a DNA helicase with 3'-5' polarity. The sequence is that of ATP-dependent DNA helicase RecG from Acidithiobacillus ferridurans.